The sequence spans 49 residues: Large ribosomal subunit protein bL32 (49 aa).

A disordered region spans residues 25-49 (AKPVKDKDGTYKLPHHINPTTGEYK).

The protein belongs to the bacterial ribosomal protein bL32 family.

In Sulfurimonas denitrificans (strain ATCC 33889 / DSM 1251) (Thiomicrospira denitrificans (strain ATCC 33889 / DSM 1251)), this protein is Large ribosomal subunit protein bL32.